Reading from the N-terminus, the 180-residue chain is ATP synthase subunit delta (180 aa).

This sequence belongs to the ATPase delta chain family. F-type ATPases have 2 components, F(1) - the catalytic core - and F(0) - the membrane proton channel. F(1) has five subunits: alpha(3), beta(3), gamma(1), delta(1), epsilon(1). F(0) has three main subunits: a(1), b(2) and c(10-14). The alpha and beta chains form an alternating ring which encloses part of the gamma chain. F(1) is attached to F(0) by a central stalk formed by the gamma and epsilon chains, while a peripheral stalk is formed by the delta and b chains.

It is found in the cell membrane. Its function is as follows. F(1)F(0) ATP synthase produces ATP from ADP in the presence of a proton or sodium gradient. F-type ATPases consist of two structural domains, F(1) containing the extramembraneous catalytic core and F(0) containing the membrane proton channel, linked together by a central stalk and a peripheral stalk. During catalysis, ATP synthesis in the catalytic domain of F(1) is coupled via a rotary mechanism of the central stalk subunits to proton translocation. In terms of biological role, this protein is part of the stalk that links CF(0) to CF(1). It either transmits conformational changes from CF(0) to CF(1) or is implicated in proton conduction. The chain is ATP synthase subunit delta from Bacillus mycoides (strain KBAB4) (Bacillus weihenstephanensis).